We begin with the raw amino-acid sequence, 1293 residues long: Phosphoribosylformylglycinamidine synthase (1293 aa).

ATP contacts are provided by residues 305–316 (GAATGSGGEIRD) and alanine 676. The Mg(2+) site is built by aspartate 677, glutamate 716, asparagine 720, and aspartate 884. Residue serine 886 participates in ATP binding. One can recognise a Glutamine amidotransferase type-1 domain in the interval 1040–1293 (MAILREQGVN…MFRNARVKLG (254 aa)). Catalysis depends on cysteine 1133, which acts as the Nucleophile. Active-site residues include histidine 1258 and glutamate 1260.

This sequence in the N-terminal section; belongs to the FGAMS family. As to quaternary structure, monomer.

It localises to the cytoplasm. The enzyme catalyses N(2)-formyl-N(1)-(5-phospho-beta-D-ribosyl)glycinamide + L-glutamine + ATP + H2O = 2-formamido-N(1)-(5-O-phospho-beta-D-ribosyl)acetamidine + L-glutamate + ADP + phosphate + H(+). It functions in the pathway purine metabolism; IMP biosynthesis via de novo pathway; 5-amino-1-(5-phospho-D-ribosyl)imidazole from N(2)-formyl-N(1)-(5-phospho-D-ribosyl)glycinamide: step 1/2. Phosphoribosylformylglycinamidine synthase involved in the purines biosynthetic pathway. Catalyzes the ATP-dependent conversion of formylglycinamide ribonucleotide (FGAR) and glutamine to yield formylglycinamidine ribonucleotide (FGAM) and glutamate. The sequence is that of Phosphoribosylformylglycinamidine synthase from Shewanella denitrificans (strain OS217 / ATCC BAA-1090 / DSM 15013).